The primary structure comprises 88 residues: UPF0237 protein SMU_72 (88 aa).

One can recognise an ACT domain in the interval 4 to 77 (IITVVGKDRT…ETLNVKINIQ (74 aa)).

The protein belongs to the UPF0237 family. In terms of assembly, homodimer.

This is UPF0237 protein SMU_72 from Streptococcus mutans serotype c (strain ATCC 700610 / UA159).